We begin with the raw amino-acid sequence, 119 residues long: Large ribosomal subunit protein uL24 (119 aa).

It belongs to the universal ribosomal protein uL24 family. Part of the 50S ribosomal subunit.

One of two assembly initiator proteins, it binds directly to the 5'-end of the 23S rRNA, where it nucleates assembly of the 50S subunit. Its function is as follows. Located at the polypeptide exit tunnel on the outside of the subunit. In Saccharolobus solfataricus (strain ATCC 35092 / DSM 1617 / JCM 11322 / P2) (Sulfolobus solfataricus), this protein is Large ribosomal subunit protein uL24.